Consider the following 171-residue polypeptide: Putative lipoprotein LppO (171 aa).

The N-terminal stretch at Met-1–Ala-28 is a signal peptide. The N-palmitoyl cysteine moiety is linked to residue Cys-29. The S-diacylglycerol cysteine moiety is linked to residue Cys-29.

Its subcellular location is the cell membrane. The chain is Putative lipoprotein LppO (lppO) from Mycobacterium tuberculosis (strain CDC 1551 / Oshkosh).